Reading from the N-terminus, the 537-residue chain is Phosphoenolpyruvate carboxykinase (ATP) (537 aa).

The substrate site is built by Arg61, Tyr195, and Lys201. ATP contacts are provided by residues Lys201, His220, and 236 to 244 (GLSGTGKTT). Residues Lys201 and His220 each contribute to the Mn(2+) site. Asp257 is a binding site for Mn(2+). The ATP site is built by Glu285, Arg323, and Thr448. Arg323 provides a ligand contact to substrate.

It belongs to the phosphoenolpyruvate carboxykinase (ATP) family. Mn(2+) serves as cofactor.

The protein localises to the cytoplasm. It carries out the reaction oxaloacetate + ATP = phosphoenolpyruvate + ADP + CO2. It participates in carbohydrate biosynthesis; gluconeogenesis. In terms of biological role, involved in the gluconeogenesis. Catalyzes the conversion of oxaloacetate (OAA) to phosphoenolpyruvate (PEP) through direct phosphoryl transfer between the nucleoside triphosphate and OAA. The chain is Phosphoenolpyruvate carboxykinase (ATP) from Rhodopseudomonas palustris (strain HaA2).